The following is a 59-amino-acid chain: Protein SspF (59 aa).

This sequence belongs to the alpha/beta-type SASP family.

Its function is as follows. May play some important role in either sporulation or the dormant spore. This is Protein SspF (sspF) from Bacillus cereus (strain ATCC 14579 / DSM 31 / CCUG 7414 / JCM 2152 / NBRC 15305 / NCIMB 9373 / NCTC 2599 / NRRL B-3711).